The primary structure comprises 435 residues: Trigger factor (435 aa).

The region spanning 183–263 (GDFINVDVTI…VKTIWQGNMP (81 aa)) is the PPIase FKBP-type domain.

The protein belongs to the FKBP-type PPIase family. Tig subfamily.

It is found in the cytoplasm. The enzyme catalyses [protein]-peptidylproline (omega=180) = [protein]-peptidylproline (omega=0). Its function is as follows. Involved in protein export. Acts as a chaperone by maintaining the newly synthesized protein in an open conformation. Functions as a peptidyl-prolyl cis-trans isomerase. The polypeptide is Trigger factor (Protochlamydia amoebophila (strain UWE25)).